Here is a 235-residue protein sequence, read N- to C-terminus: Elongation factor Tu, chloroplastic (235 aa).

Positions 1 to 125 (KNMITGAAQM…EVDNYIPLPT (125 aa)) constitute a tr-type G domain. 47–50 (NKAD) is a GTP binding site.

Belongs to the TRAFAC class translation factor GTPase superfamily. Classic translation factor GTPase family. EF-Tu/EF-1A subfamily.

The protein localises to the plastid. It is found in the chloroplast. It carries out the reaction GTP + H2O = GDP + phosphate + H(+). In terms of biological role, GTP hydrolase that promotes the GTP-dependent binding of aminoacyl-tRNA to the A-site of ribosomes during protein biosynthesis. The sequence is that of Elongation factor Tu, chloroplastic (tufA) from Bryopsis plumosa (Green alga).